The chain runs to 354 residues: Histidinol-phosphate aminotransferase 1 (354 aa).

The residue at position 209 (Lys-209) is an N6-(pyridoxal phosphate)lysine.

It belongs to the class-II pyridoxal-phosphate-dependent aminotransferase family. Histidinol-phosphate aminotransferase subfamily. Homodimer. The cofactor is pyridoxal 5'-phosphate.

The enzyme catalyses L-histidinol phosphate + 2-oxoglutarate = 3-(imidazol-4-yl)-2-oxopropyl phosphate + L-glutamate. Its pathway is amino-acid biosynthesis; L-histidine biosynthesis; L-histidine from 5-phospho-alpha-D-ribose 1-diphosphate: step 7/9. The polypeptide is Histidinol-phosphate aminotransferase 1 (hisC1) (Oceanobacillus iheyensis (strain DSM 14371 / CIP 107618 / JCM 11309 / KCTC 3954 / HTE831)).